We begin with the raw amino-acid sequence, 80 residues long: Acyl carrier protein (80 aa).

The 76-residue stretch at 3–78 (DDTFSRIQSI…QVLEYIEAES (76 aa)) folds into the Carrier domain. Residue S38 is modified to O-(pantetheine 4'-phosphoryl)serine.

The protein belongs to the acyl carrier protein (ACP) family. Post-translationally, 4'-phosphopantetheine is transferred from CoA to a specific serine of apo-ACP by AcpS. This modification is essential for activity because fatty acids are bound in thioester linkage to the sulfhydryl of the prosthetic group.

The protein resides in the plastid. The protein localises to the chloroplast. It functions in the pathway lipid metabolism; fatty acid biosynthesis. In terms of biological role, carrier of the growing fatty acid chain in fatty acid biosynthesis. The protein is Acyl carrier protein of Trieres chinensis (Marine centric diatom).